The chain runs to 310 residues: Dehydrodolichyl diphosphate synthase 2 (310 aa).

The protein belongs to the UPP synthase family. Requires Mg(2+) as cofactor.

Its pathway is protein modification; protein glycosylation. In terms of biological role, catalyzes cis-prenyl chain elongation to produce the polyprenyl backbone of dolichol, a glycosyl carrier-lipid required for the biosynthesis of several classes of glycoprotein. This chain is Dehydrodolichyl diphosphate synthase 2, found in Arabidopsis thaliana (Mouse-ear cress).